A 339-amino-acid polypeptide reads, in one-letter code: MYAFARKLLFSLDPETAHELSLDCLGAAERLQLLKPFVATPVSDPVEVMGLRFPNAVGLAAGLDKNADYFNALGQLGFGSVEVGTVTPLPQPGNPQPRLFRLIEEEGIINRMGFNNKGVAHLVAAVARRRYRGVLGINIGKNKATPEEQALSDYEKCMDAVYESADYIAINISSPNTPGLRNLQFGENLSHLLQGIKRRQALLHEATGKRVPIAVKIAPDMTDDEIKGVADALVSNQYEAVIATNTTVSRDEVPHSPHKEEMGGLSGRPVAEKSTHVIRVLAEHMQGAMPIIGVGGIMTGADAEEKIRAGASLVQLYSGFIYRGPALVSEAASAVAALS.

FMN-binding positions include 61–65 (AGLDK) and threonine 85. Lysine 65 contacts substrate. 110 to 114 (NRMGF) contributes to the substrate binding site. FMN contacts are provided by asparagine 138 and asparagine 171. Position 171 (asparagine 171) interacts with substrate. The active-site Nucleophile is serine 174. Position 176 (asparagine 176) interacts with substrate. FMN contacts are provided by lysine 216 and threonine 244. A substrate-binding site is contributed by 245–246 (NT). Residues glycine 267, glycine 296, and 317-318 (YS) contribute to the FMN site.

This sequence belongs to the dihydroorotate dehydrogenase family. Type 2 subfamily. In terms of assembly, monomer. Requires FMN as cofactor.

Its subcellular location is the cell membrane. It catalyses the reaction (S)-dihydroorotate + a quinone = orotate + a quinol. Its pathway is pyrimidine metabolism; UMP biosynthesis via de novo pathway; orotate from (S)-dihydroorotate (quinone route): step 1/1. Its function is as follows. Catalyzes the conversion of dihydroorotate to orotate with quinone as electron acceptor. This Teredinibacter turnerae (strain ATCC 39867 / T7901) protein is Dihydroorotate dehydrogenase (quinone).